The chain runs to 92 residues: MSELEKAVVALIDVFHQYSGREGDKHKLKKSELKELINNELSHFLEEIKEQEVVDKVMETLDSDGDGECDFQEFMAFVAMITTACHEFFEHE.

Ser-2 is modified (N-acetylserine). EF-hand domains are found at residues 13-48 and 49-84; these read DVFHQYSGREGDKHKLKKSELKELINNELSHFLEEI and KEQEVVDKVMETLDSDGDGECDFQEFMAFVAMITTA. His-16 serves as a coordination point for Zn(2+). Ser-19, Glu-22, and Asp-24 together coordinate Ca(2+). His-26 contributes to the Zn(2+) binding site. Ca(2+) is bound by residues Asp-62, Asp-64, Asp-66, Glu-68, and Glu-73. The Zn(2+) site is built by His-86 and His-91.

The protein belongs to the S-100 family. In terms of assembly, dimer of either two alpha chains, or two beta chains, or one alpha and one beta chain. The S100B dimer binds two molecules of STK38. Interacts with CACYBP in a calcium-dependent manner. Interacts with ATAD3A; this interaction probably occurs in the cytosol prior to ATAD3A mitochondrial targeting. Interacts with S100A6. The S100B dimer interacts with two molecules of CAPZA1. Interacts with AGER. Interacts with PPP5C (via TPR repeats); the interaction is calcium-dependent and modulates PPP5C activity. Interacts with TPPP; this interaction inhibits TPPP dimerization. Interacts with isoform CLSTN3beta of CLSTN3; interaction promotes secretion.

It localises to the cytoplasm. The protein localises to the nucleus. The protein resides in the secreted. Small zinc- and- and calcium-binding protein that is highly expressed in astrocytes and constitutes one of the most abundant soluble proteins in brain. Weakly binds calcium but binds zinc very tightly-distinct binding sites with different affinities exist for both ions on each monomer. Physiological concentrations of potassium ion antagonize the binding of both divalent cations, especially affecting high-affinity calcium-binding sites. Acts as a neurotrophic factor that promotes astrocytosis and axonal proliferation. Involved in innervation of thermogenic adipose tissue by acting as an adipocyte-derived neurotrophic factor that promotes sympathetic innervation of adipose tissue. Binds to and initiates the activation of STK38 by releasing autoinhibitory intramolecular interactions within the kinase. Interaction with AGER after myocardial infarction may play a role in myocyte apoptosis by activating ERK1/2 and p53/TP53 signaling. Could assist ATAD3A cytoplasmic processing, preventing aggregation and favoring mitochondrial localization. May mediate calcium-dependent regulation on many physiological processes by interacting with other proteins, such as TPR-containing proteins, and modulating their activity. This chain is Protein S100-B (S100B), found in Bos taurus (Bovine).